The primary structure comprises 149 residues: D-aminoacyl-tRNA deacylase (149 aa).

The Gly-cisPro motif, important for rejection of L-amino acids signature appears at 141-142 (GP).

This sequence belongs to the DTD family. Homodimer.

Its subcellular location is the cytoplasm. The enzyme catalyses glycyl-tRNA(Ala) + H2O = tRNA(Ala) + glycine + H(+). The catalysed reaction is a D-aminoacyl-tRNA + H2O = a tRNA + a D-alpha-amino acid + H(+). An aminoacyl-tRNA editing enzyme that deacylates mischarged D-aminoacyl-tRNAs. Also deacylates mischarged glycyl-tRNA(Ala), protecting cells against glycine mischarging by AlaRS. Acts via tRNA-based rather than protein-based catalysis; rejects L-amino acids rather than detecting D-amino acids in the active site. By recycling D-aminoacyl-tRNA to D-amino acids and free tRNA molecules, this enzyme counteracts the toxicity associated with the formation of D-aminoacyl-tRNA entities in vivo and helps enforce protein L-homochirality. The chain is D-aminoacyl-tRNA deacylase from Streptomyces griseus subsp. griseus (strain JCM 4626 / CBS 651.72 / NBRC 13350 / KCC S-0626 / ISP 5235).